A 444-amino-acid chain; its full sequence is RAC family serine/threonine-protein kinase homolog (444 aa).

The 96-residue stretch at P5 to E100 folds into the PH domain. The 255-residue stretch at F120 to F374 folds into the Protein kinase domain. ATP-binding positions include V126–V134 and K149. The Proton acceptor role is filled by D243. Phosphothreonine is present on T278. Positions R375 to R444 constitute an AGC-kinase C-terminal domain.

It belongs to the protein kinase superfamily. AGC Ser/Thr protein kinase family. RAC subfamily.

The enzyme catalyses L-seryl-[protein] + ATP = O-phospho-L-seryl-[protein] + ADP + H(+). The catalysed reaction is L-threonyl-[protein] + ATP = O-phospho-L-threonyl-[protein] + ADP + H(+). Its function is as follows. Predominantly involved during the aggregation to control cell polarity and chemotaxis. Phosphorylates talB, gefN, gefS, PI4P 5-kinase and gacQ. This chain is RAC family serine/threonine-protein kinase homolog (pkbA), found in Dictyostelium discoideum (Social amoeba).